A 348-amino-acid chain; its full sequence is 4-hydroxy-2-oxovalerate aldolase 1 (348 aa).

Residues 8-260 (ITVHDMTLRD…QTGVDVWAIQ (253 aa)) enclose the Pyruvate carboxyltransferase domain. 16-17 (RD) contacts substrate. A Mn(2+)-binding site is contributed by aspartate 17. Catalysis depends on histidine 20, which acts as the Proton acceptor. Substrate is bound by residues serine 170 and histidine 199. Mn(2+) contacts are provided by histidine 199 and histidine 201. Tyrosine 290 serves as a coordination point for substrate.

This sequence belongs to the 4-hydroxy-2-oxovalerate aldolase family.

It carries out the reaction (S)-4-hydroxy-2-oxopentanoate = acetaldehyde + pyruvate. This Cupriavidus metallidurans (strain ATCC 43123 / DSM 2839 / NBRC 102507 / CH34) (Ralstonia metallidurans) protein is 4-hydroxy-2-oxovalerate aldolase 1.